The chain runs to 471 residues: Threonine--tRNA ligase catalytic subunit (471 aa).

Positions 8 to 333 (THIDYAYELD…YLEHRRGRMP (326 aa)) are catalytic. Positions 112, 166, and 310 each coordinate Zn(2+).

Belongs to the class-II aminoacyl-tRNA synthetase family. As to quaternary structure, homodimer. Probably interacts with its editing subunit. Zn(2+) is required as a cofactor.

The protein resides in the cytoplasm. It carries out the reaction tRNA(Thr) + L-threonine + ATP = L-threonyl-tRNA(Thr) + AMP + diphosphate + H(+). In terms of biological role, catalyzes the attachment of threonine to tRNA(Thr) in a two-step reaction: L-threonine is first activated by ATP to form Thr-AMP and then transferred to the acceptor end of tRNA(Thr). This protein is probably not able to deacylate mischarged L-seryl-tRNA(Thr) as it lacks the appropriate domain. In Aeropyrum pernix (strain ATCC 700893 / DSM 11879 / JCM 9820 / NBRC 100138 / K1), this protein is Threonine--tRNA ligase catalytic subunit.